Here is a 270-residue protein sequence, read N- to C-terminus: MKKLLIILAATLVLVLGSSGNFREYYGARGVAVNIADNNSSYIGFECPEMTLYLANGDSTGVISVKNNLGEDVELYFSTPNDILTFSNPTFLYAGEEKLVEAEFRGSQGEYTIPIDIEAFWDNGSAKIPACSVKVVDPAVRMSKVLLSGNTTVPLFTREVWKFRILVESDAGDNYTILDTIPAEFEVLSIAASDGSFATHHPGAGRSCTTKIVWDVYVEGTEFMDVTIATKHNPAGKQEFTSPGSYNLNDGAEIKGLGIVSNPIIVKAVR.

The signal sequence occupies residues 1 to 23 (MKKLLIILAATLVLVLGSSGNFR).

This is an uncharacterized protein from Archaeoglobus fulgidus (strain ATCC 49558 / DSM 4304 / JCM 9628 / NBRC 100126 / VC-16).